A 96-amino-acid chain; its full sequence is Small ribosomal subunit protein bS20 (96 aa).

The protein belongs to the bacterial ribosomal protein bS20 family.

Functionally, binds directly to 16S ribosomal RNA. The polypeptide is Small ribosomal subunit protein bS20 (Anaplasma marginale (strain St. Maries)).